The sequence spans 782 residues: E3 ubiquitin-protein ligase SopA (782 aa).

Residues 137–171 form a disordered region; the sequence is VSVSANNRPTVSEGRTPPVSPSLSLQATSSPSSPA. Positions 157-171 are enriched in low complexity; it reads PSLSLQATSSPSSPA. Residue C753 is the Glycyl thioester intermediate of the active site.

The protein belongs to the SopA E3 ligase family. Ubiquitinated in the presence of host E1 ubiquitin-activating enzyme, E2 ubiquitin-conjugating enzyme and ubiquitin.

Its subcellular location is the secreted. The protein localises to the host cell. The catalysed reaction is S-ubiquitinyl-[E2 ubiquitin-conjugating enzyme]-L-cysteine + [acceptor protein]-L-lysine = [E2 ubiquitin-conjugating enzyme]-L-cysteine + N(6)-ubiquitinyl-[acceptor protein]-L-lysine.. Functionally, effector proteins function to alter host cell physiology and promote bacterial survival in host tissues. This protein is an E3 ubiquitin ligase that interferes with host's ubiquitination pathway. The chain is E3 ubiquitin-protein ligase SopA (sopA) from Salmonella newport (strain SL254).